The primary structure comprises 491 residues: Synaptotagmin-9 (491 aa).

The Vesicular segment spans residues 1–52 (MPGARDALCHQALQLLAELCARGALEHDSCQDFIYHLRDRARPRLRDPDISV). The segment at 9–31 (CHQALQLLAELCARGALEHDSCQ) is cysteine motif. The chain crosses the membrane as a helical span at residues 53–73 (SLLTLVVTACGLALFGVSLFV). At 74–491 (SWKLCWVPWR…AHWHSLMEKR (418 aa)) the chain is on the cytoplasmic side. The span at 91 to 104 (SKDNNQEPLNYTDT) shows a compositional bias: polar residues. The tract at residues 91 to 147 (SKDNNQEPLNYTDTETNEQENSEDFLDPPTPCPDSSMKISHTSPDIPLSTQPGGQEN) is disordered. The span at 105 to 116 (ETNEQENSEDFL) shows a compositional bias: acidic residues. Positions 127–144 (MKISHTSPDIPLSTQPGG) are enriched in polar residues. Serine 177 is subject to Phosphoserine. C2 domains lie at 220–341 (ACGK…ILWK) and 352–485 (DLGE…AHWH). Positions 251, 257, 309, 310, 311, 314, 317, 383, 389, 443, and 445 each coordinate Ca(2+).

This sequence belongs to the synaptotagmin family. Homodimer; disulfide-linked via the cysteine motif. Can also form heterodimers with SYT3, SYT6, SYT7 and SYT10. Interacts with DNAJC5 and SNAP25, but not with HSC70. The interaction with DNAJC5 is stimulated tenfold in presence of calcium while the interaction with SNAP25 is inhibited. It depends on Ca(2+) as a cofactor.

The protein resides in the cytoplasmic vesicle. It localises to the secretory vesicle. The protein localises to the synaptic vesicle membrane. May be involved in Ca(2+)-dependent exocytosis of secretory vesicles through Ca(2+) and phospholipid binding to the C2 domain or may serve as Ca(2+) sensors in the process of vesicular trafficking and exocytosis. This Mus musculus (Mouse) protein is Synaptotagmin-9 (Syt9).